We begin with the raw amino-acid sequence, 245 residues long: Probable phosphatase YcdX (245 aa).

Zn(2+)-binding residues include His7, His9, His15, His40, Glu73, His101, His131, Asp192, and His194.

The protein belongs to the PHP family. As to quaternary structure, homotrimer. Requires Zn(2+) as cofactor.

This Salmonella arizonae (strain ATCC BAA-731 / CDC346-86 / RSK2980) protein is Probable phosphatase YcdX.